A 240-amino-acid polypeptide reads, in one-letter code: Small ribosomal subunit protein uS2 (240 aa).

Belongs to the universal ribosomal protein uS2 family.

In Pasteurella multocida (strain Pm70), this protein is Small ribosomal subunit protein uS2 (rpsB).